Here is a 175-residue protein sequence, read N- to C-terminus: Peptide deformylase (175 aa).

Fe cation is bound by residues cysteine 96 and histidine 138. Residue glutamate 139 is part of the active site. Histidine 142 lines the Fe cation pocket.

Belongs to the polypeptide deformylase family. It depends on Fe(2+) as a cofactor.

The catalysed reaction is N-terminal N-formyl-L-methionyl-[peptide] + H2O = N-terminal L-methionyl-[peptide] + formate. In terms of biological role, removes the formyl group from the N-terminal Met of newly synthesized proteins. Requires at least a dipeptide for an efficient rate of reaction. N-terminal L-methionine is a prerequisite for activity but the enzyme has broad specificity at other positions. The chain is Peptide deformylase from Helicobacter acinonychis (strain Sheeba).